We begin with the raw amino-acid sequence, 225 residues long: 7-cyano-7-deazaguanine synthase (225 aa).

8–18 lines the ATP pocket; it reads VSGGADSATVL. Positions 188, 198, 201, and 204 each coordinate Zn(2+).

This sequence belongs to the QueC family. Zn(2+) serves as cofactor.

The catalysed reaction is 7-carboxy-7-deazaguanine + NH4(+) + ATP = 7-cyano-7-deazaguanine + ADP + phosphate + H2O + H(+). It participates in purine metabolism; 7-cyano-7-deazaguanine biosynthesis. Its function is as follows. Catalyzes the ATP-dependent conversion of 7-carboxy-7-deazaguanine (CDG) to 7-cyano-7-deazaguanine (preQ(0)). In Rickettsia bellii (strain OSU 85-389), this protein is 7-cyano-7-deazaguanine synthase.